The chain runs to 1413 residues: MADDHKVESGLNTHVEKRAEEVHQLARQFTEQSTFSTAGQNPFAAEPGSVLDPIGNNFDALAWCKAMLHVHTEDEKAHPLRTLGIAFNNLYVHGFGSDTDYQKSVGNVWFEALALARKALGTQNQRRIQILQNLEGTVEAGEMLVVLGPPGSGCSTFLKTIAGETDGFHIDKESSINYQGVSAKKMAHEFRGEAIYAAEVDVHFPKLTVGDTLYFAARARAPRHIPGGVDVAQYASHKRDVIMAILGISHTKNTIVGNDFIRGVSGGERKRVSIAEACLSSAPLQCWDNSTRGLDSANAIEFCKALRMQADINGATVCVSLYQAPQAAYHYFDKVLVLYEGRQIFFGRTDAAKQYFLDMGFACPERQTDADFLTSMTSHIERVVQPGYEGCVPRTPDEFAARWRGSHQRARVLQDVENYNTKFTLNGEFLGKFRHSRRAQQARVQRVSSPYTLSYAQQVNLCLWRGYQRLKADPSVTISSLIGNVITALVIASIFYNLQPNTSTFFQRGALLFFACLINALGCGLEMLTLYAQRGIVEKHARYALYHPSAEAISSMIMDLPFKVLNAILSLVQALPFCAVVLLGLYSYTGFAIPTGYMLGWARWIAYINPINYGFESLLINEFHDRDFQCVAIVPSGPSYMDLHSRNQVCSTVGSVPGQAFVNGDAYIQSAYDYNVSHKWRNIGIILAFMVVLGAIYLVATDFITEKKSKGEILVFPRGHGALKSGKPDDFEGGSDRNASQEKSKSDRDDLTVIESQTAIFQWQDVCFDIKIGKESRRILDHVDGWVKPGTLTALMGVSGAGKTTLLDVLATRTTLGVISGEMLVDGKPRDESFQRKTGYAQQQDLHLSTATVREALEFSALLRQPAHVPRREKINYVTEVIKLLDMADYADAVIGVPGEGLNVEQRKRLTIGVELAARPALLLFLDEPTSGLDSQTSWAILDLLNKLRKNGQAILCTIHQPSAMLFQRFDRLLFLQAGGQTVYFGDIGQNSQILIDYFVRNGGPPCPPAANPAEWMLDVIGAAPGSHTDIDWFETWRNSPEYAQVQAHLSSLKLEHAQQNPLARVSPGTEREDRASYREFAAPFCAQLREVQIRVFQQFWRSPIYIYSKAILCVLPALFVGFSLFNTPNTIQGLQNQMFSIFLLLIQFGQLIQQIMPHFVTQRALYEVRERPSKTYSWTVFMLSNIGVELFWNSLMSILMFLCWYYPIGMYRNAEPSDTVHLRGAQMWLLIWTFLLFSSTFAHFMIAALDAAENAGNLGSFLLLLCLLFCGVLATPAQLPGFWIFMYRVSPFTYLVSGMLAVGIADTTVTCADNEYLRFDPVNDTTCGQYLAPYIAQAGGYLHDETATAACRFCPVADTNAYLRGVGASYADVWRNFGLMWVFIFTNIVAACLLYWWTRVPRVKKPVVAPQA.

The region spanning 108–365 is the ABC transporter 1 domain; sequence VWFEALALAR…FLDMGFACPE (258 aa). N-linked (GlcNAc...) asparagine glycosylation is present at Asn289. A helical membrane pass occupies residues 476-496; that stretch reads VTISSLIGNVITALVIASIFY. Asn501 carries N-linked (GlcNAc...) asparagine glycosylation. 2 consecutive transmembrane segments (helical) span residues 510-530 and 564-584; these read ALLF…MLTL and VLNA…VLLG. N-linked (GlcNAc...) asparagine glycosylation is present at Asn675. A helical transmembrane segment spans residues 683-703; it reads IGIILAFMVVLGAIYLVATDF. The segment at 725-748 is disordered; that stretch reads SGKPDDFEGGSDRNASQEKSKSDR. N-linked (GlcNAc...) asparagine glycosylation occurs at Asn738. Over residues 739–748 the composition is skewed to basic and acidic residues; that stretch reads ASQEKSKSDR. The ABC transporter 2 domain maps to 761–1003; sequence FQWQDVCFDI…ILIDYFVRNG (243 aa). 6 helical membrane-spanning segments follow: residues 1105–1125, 1142–1162, 1191–1211, 1230–1250, 1266–1286, and 1290–1310; these read IYIY…GFSL, IFLL…HFVT, LFWN…PIGM, LLIW…IAAL, LCLL…FWIF, and VSPF…DTTV. A glycan (N-linked (GlcNAc...) asparagine) is linked at Asn1324. Residues 1378 to 1398 traverse the membrane as a helical segment; the sequence is FGLMWVFIFTNIVAACLLYWW.

The protein belongs to the ABC transporter superfamily. ABCG family. PDR (TC 3.A.1.205) subfamily.

The protein resides in the cell membrane. In terms of biological role, ABC-type transporter; part of the gene cluster that mediates the biosynthesis of the sesterterpene variecolin. VrcC is probably involved in the secretion of variecolin. This Aspergillus aculeatus (strain ATCC 16872 / CBS 172.66 / WB 5094) protein is ABC-type transporter vrcC.